The chain runs to 448 residues: C4-dicarboxylate transport protein 2 (448 aa).

9 consecutive transmembrane segments (helical) span residues 13 to 33, 49 to 69, 81 to 101, 149 to 169, 193 to 213, 227 to 247, 294 to 314, 335 to 355, and 357 to 377; these read SLYVQVLAAVTIGVLLGHFSP, LIKMIIAPIIFCTVVIGIAGM, LALLYFEVMSTLALVIGLIVV, AFAKGEILQVLLFSVLFGFAL, IVGIIMKVAPIGAFGAMAFTI, LMGAFYLTCLIFVFVVLGIVS, VVGLVIPTGYSFNLDGTSIYL, ITLLAVLMLTSKGAAGITGSG, and IVLAATLSAVGGVPVAGLALI.

The protein belongs to the dicarboxylate/amino acid:cation symporter (DAACS) (TC 2.A.23) family.

The protein resides in the cell inner membrane. In terms of biological role, responsible for the transport of dicarboxylates such as succinate, fumarate, and malate from the periplasm across the membrane. This Polaromonas naphthalenivorans (strain CJ2) protein is C4-dicarboxylate transport protein 2.